Consider the following 796-residue polypeptide: Histone-lysine N-methyltransferase PRDM9 (796 aa).

The interval 1-23 (MSRTMNTNKPEENSTEGDAGKLE) is disordered. The KRAB-related domain occupies 27 to 90 (KVKDEFKDIS…QRQAIKPQIN (64 aa)). The interval 149–172 (SEHAQKPVCSPEEGNTSGQHFGKK) is disordered. C209, C212, C220, and H223 together coordinate Zn(2+). Residues 248–362 (PGLRIGPSGI…PGRELLVWYG (115 aa)) form the SET domain. Residues 260 to 262 (AGL), Y295, and 324 to 325 (NC) contribute to the S-adenosyl-L-methionine site. 292 to 298 (NSGYSWL) provides a ligand contact to substrate. Position 361 (Y361) interacts with substrate. At K372 the chain carries N6,N6,N6-trimethyllysine; alternate. K372 carries the N6-methyllysine; alternate modification. An N6-methyllysine mark is found at K376 and K378. A C2H2-type 1 zinc finger spans residues 392-415 (HPCFLCSLAFSSQKFLTQHVEWNH). Residues C394, C397, H410, and H415 each coordinate Zn(2+). Residues 443 to 457 (FDSQNKNDKASNEVK) show a composition bias toward basic and acidic residues. The interval 443 to 497 (FDSQNKNDKASNEVKRKSKPRHKWTRQRISTAFSSTLKEQMRSEESKRTVEEELR) is disordered. Over residues 458-468 (RKSKPRHKWTR) the composition is skewed to basic residues. Residues 469-480 (QRISTAFSSTLK) show a composition bias toward polar residues. Residues 481-497 (EQMRSEESKRTVEEELR) are compositionally biased toward basic and acidic residues. The segment at 522-540 (QCGQCFSDKSNVSEHQRTH) adopts a C2H2-type 2; degenerate zinc-finger fold. C2H2-type zinc fingers lie at residues 546–568 (YICRECGRGFSQKSDLIKHQRTH), 574–596 (YICRECGRGFTQKSDLIKHQRTH), 602–624 (YICRECGRGFTQKSDLIKHQRTH), 630–652 (YICRECGRGFTQKSDLIKHQRTH), 658–680 (YICRECGRGFTQKSSLIRHQRTH), 686–708 (YICRECGLGFTQKSNLIRHLRTH), 714–736 (YICRECGLGFTRKSNLIQHQRTH), 742–764 (YICRECGQGLTWKSSLIQHQRTH), and 770–792 (YICRECGRGFTWKSSLIQHQRTH). Zn(2+) contacts are provided by C716, C719, H732, H736, C744, C747, H760, H764, C772, C775, H788, and H792.

The protein belongs to the class V-like SAM-binding methyltransferase superfamily. In terms of assembly, homodimer. Interacts with EHMT2 and CDYL; interaction only takes place when PRDM9 is bound to hotspot DNA. Interacts with CXXC1; this interaction does not link PRDM9-activated recombination hotspot sites with DSB machinery and is not required for the hotspot recognition pathway. Forms a complex with EWSR1, REC8, SYCP3 and SYCP1; complex formation is dependent of phosphorylated form of REC8 and requires PRDM9 bound to hotspot DNA; EWSR1 joins PRDM9 with the chromosomal axis through REC8. Mono-methylated; automethylated. Tri-methylated; automethylated. Mono-methylation is predominant; automethylation is lower and slower than H3 peptide methylation and is in a highest S-adenosyl-L-methionine concentration-dependent. There are two major sites for automethylation at Lys-372 and Lys-378. Lysines can be simultaneously methylated, such as Lys-372(me3)/Lys-376(me1), Lys-372(me1)/Lys-378(me1) and Lys-372(me1)/Lys-376(me1)/Lys-378(me1). Automethylation is an intramolecular (cis) process.

The protein localises to the nucleus. It is found in the chromosome. It carries out the reaction L-lysyl-[protein] + S-adenosyl-L-methionine = N(6)-methyl-L-lysyl-[protein] + S-adenosyl-L-homocysteine + H(+). It catalyses the reaction N(6)-methyl-L-lysyl-[protein] + S-adenosyl-L-methionine = N(6),N(6)-dimethyl-L-lysyl-[protein] + S-adenosyl-L-homocysteine + H(+). The catalysed reaction is L-lysyl(4)-[histone H3] + 3 S-adenosyl-L-methionine = N(6),N(6),N(6)-trimethyl-L-lysyl(4)-[histone H3] + 3 S-adenosyl-L-homocysteine + 3 H(+). The enzyme catalyses L-lysyl(36)-[histone H3] + 3 S-adenosyl-L-methionine = N(6),N(6),N(6)-trimethyl-L-lysyl(36)-[histone H3] + 3 S-adenosyl-L-homocysteine + 3 H(+). It carries out the reaction L-lysyl(9)-[histone H3] + 3 S-adenosyl-L-methionine = N(6),N(6),N(6)-trimethyl-L-lysyl(9)-[histone H3] + 3 S-adenosyl-L-homocysteine + 3 H(+). It catalyses the reaction L-lysyl(20)-[histone H4] + S-adenosyl-L-methionine = N(6)-methyl-L-lysyl(20)-[histone H4] + S-adenosyl-L-homocysteine + H(+). The catalysed reaction is N(6)-methyl-L-lysyl(20)-[histone H4] + S-adenosyl-L-methionine = N(6),N(6)-dimethyl-L-lysyl(20)-[histone H4] + S-adenosyl-L-homocysteine + H(+). Histone methyltransferase that sequentially mono-, di-, and tri-methylates both 'Lys-4' (H3K4) and 'Lys-36' (H3K36) of histone H3 to produce respectively trimethylated 'Lys-4' (H3K4me3) and trimethylated 'Lys-36' (H3K36me3) histone H3 and plays a key role in meiotic prophase by determining hotspot localization thereby promoting meiotic recombination. Can also methylate all four core histones with H3 being the best substrate and the most highly modified. Is also able, on one hand, to mono and di-methylate H4K20 and on other hand to trimethylate H3K9 with the di-methylated H3K9 as the best substrate. During meiotic prophase, binds specific DNA sequences through its zinc finger domains thereby determining hotspot localization where it promotes local H3K4me3 and H3K36me3 enrichment on the same nucleosomes through its histone methyltransferase activity. Thereby promotes double-stranded breaks (DSB) formation, at this subset of PRDM9-binding sites, that initiates meiotic recombination for the proper meiotic progression. During meiotic progression hotspot-bound PRDM9 interacts with several complexes; in early leptonema binds CDYL and EHMT2 followed by EWSR1 and CXXC1 by the end of leptonema. EWSR1 joins PRDM9 with the chromosomal axis through REC8. In this way, controls the DSB repair pathway, pairing of homologous chromosomes and sex body formation. Moreover plays a central role in the transcriptional activation of genes during early meiotic prophase thanks to H3K4me3 and H3K36me3 enrichment that represents a specific tag for epigenetic transcriptional activation. In addition performs automethylation. Acetylation and phosphorylation of histone H3 attenuate or prevent histone H3 methylation. This is Histone-lysine N-methyltransferase PRDM9 from Rattus norvegicus (Rat).